Consider the following 203-residue polypeptide: Large ribosomal subunit protein bL25 (203 aa).

Belongs to the bacterial ribosomal protein bL25 family. CTC subfamily. Part of the 50S ribosomal subunit; part of the 5S rRNA/L5/L18/L25 subcomplex. Contacts the 5S rRNA. Binds to the 5S rRNA independently of L5 and L18.

In terms of biological role, this is one of the proteins that binds to the 5S RNA in the ribosome where it forms part of the central protuberance. In Rickettsia africae (strain ESF-5), this protein is Large ribosomal subunit protein bL25.